A 135-amino-acid polypeptide reads, in one-letter code: MADNFNFELVSPERLLLSEMVTEVVIPATEGEMTVMAHHAPTMTTIKPGIVSVRSGSGKKQDYVVFGGFADILPTGCTLLAESAVPVEELNKDELTRRIEAAKKELEDAVHHEHKSKLEHFILELTHLRGVVQQD.

Belongs to the ATPase epsilon chain family. F-type ATPases have 2 components, CF(1) - the catalytic core - and CF(0) - the membrane proton channel. CF(1) has five subunits: alpha(3), beta(3), gamma(1), delta(1), epsilon(1). CF(0) has three main subunits: a, b and c.

It localises to the cell inner membrane. Its function is as follows. Produces ATP from ADP in the presence of a proton gradient across the membrane. This chain is ATP synthase epsilon chain, found in Rhizobium etli (strain CIAT 652).